The chain runs to 293 residues: Formamidopyrimidine-DNA glycosylase (293 aa).

The active-site Schiff-base intermediate with DNA is proline 2. The Proton donor role is filled by glutamate 3. Lysine 58 acts as the Proton donor; for beta-elimination activity in catalysis. The DNA site is built by histidine 104, arginine 123, and arginine 166. An FPG-type zinc finger spans residues 257 to 293; the sequence is QVYDREGDKCRTPACKGAVKRFTQNGRSTFWCPVCQT. Residue arginine 283 is the Proton donor; for delta-elimination activity of the active site.

This sequence belongs to the FPG family. In terms of assembly, monomer. The cofactor is Zn(2+).

It carries out the reaction Hydrolysis of DNA containing ring-opened 7-methylguanine residues, releasing 2,6-diamino-4-hydroxy-5-(N-methyl)formamidopyrimidine.. The enzyme catalyses 2'-deoxyribonucleotide-(2'-deoxyribose 5'-phosphate)-2'-deoxyribonucleotide-DNA = a 3'-end 2'-deoxyribonucleotide-(2,3-dehydro-2,3-deoxyribose 5'-phosphate)-DNA + a 5'-end 5'-phospho-2'-deoxyribonucleoside-DNA + H(+). Its function is as follows. Involved in base excision repair of DNA damaged by oxidation or by mutagenic agents. Acts as a DNA glycosylase that recognizes and removes damaged bases. Has a preference for oxidized purines, such as 7,8-dihydro-8-oxoguanine (8-oxoG). Has AP (apurinic/apyrimidinic) lyase activity and introduces nicks in the DNA strand. Cleaves the DNA backbone by beta-delta elimination to generate a single-strand break at the site of the removed base with both 3'- and 5'-phosphates. The protein is Formamidopyrimidine-DNA glycosylase of Nitrobacter winogradskyi (strain ATCC 25391 / DSM 10237 / CIP 104748 / NCIMB 11846 / Nb-255).